Here is a 70-residue protein sequence, read N- to C-terminus: Brevinin-1MT2 (70 aa).

Positions 1-22 are cleaved as a signal peptide; that stretch reads MFTLKKSMLLLFFLGTINLSLC. Residues 23–44 constitute a propeptide that is removed on maturation; it reads EQERNADEEERRDDDEMDVEVE. Cysteines 64 and 70 form a disulfide.

Belongs to the frog skin active peptide (FSAP) family. Brevinin subfamily. Expressed by the skin glands.

Its subcellular location is the secreted. Its function is as follows. Antimicrobial peptide with activity against a variety of Gram-negative and Gram-positive bacteria and against fungi. Shows strong hemolytic activity against human erythrocytes. This chain is Brevinin-1MT2, found in Amolops mantzorum (Sichuan torrent frog).